The chain runs to 399 residues: Enoyl-[acyl-carrier-protein] reductase [NADH] (399 aa).

Residues 48 to 53 (GASTGY), 74 to 75 (FE), 111 to 112 (DA), and 139 to 140 (LA) each bind NAD(+). Residue Tyr-225 participates in substrate binding. Tyr-235 acts as the Proton donor in catalysis. NAD(+) is bound by residues Lys-244 and 274–276 (VVT).

Belongs to the TER reductase family. As to quaternary structure, monomer.

The catalysed reaction is a 2,3-saturated acyl-[ACP] + NAD(+) = a (2E)-enoyl-[ACP] + NADH + H(+). It functions in the pathway lipid metabolism; fatty acid biosynthesis. Its function is as follows. Involved in the final reduction of the elongation cycle of fatty acid synthesis (FAS II). Catalyzes the reduction of a carbon-carbon double bond in an enoyl moiety that is covalently linked to an acyl carrier protein (ACP). The sequence is that of Enoyl-[acyl-carrier-protein] reductase [NADH] from Yersinia enterocolitica serotype O:8 / biotype 1B (strain NCTC 13174 / 8081).